Here is a 362-residue protein sequence, read N- to C-terminus: Salactin (362 aa).

Residues 1–10 (MSDDTEDDSG) are compositionally biased toward acidic residues. The disordered stretch occupies residues 1 to 28 (MSDDTEDDSGGESTADMEFGEQPAPLGV).

As to quaternary structure, forms dynamically unstable filaments. Monomers are added at the growing filament end. In vitro, salactin polymerizes in the presence of ATP and AMP-PNP but not in the presence of ADP, GTP, ATPgammaS or buffer alone.

The protein resides in the cytoplasm. In terms of biological role, actin homolog which might be involved in partitioning DNA between daughter cells when chromosomal copy number is low. The protein is Salactin of Halobacterium salinarum (strain ATCC 700922 / JCM 11081 / NRC-1) (Halobacterium halobium).